A 363-amino-acid polypeptide reads, in one-letter code: UDP-N-acetylglucosamine--N-acetylmuramyl-(pentapeptide) pyrophosphoryl-undecaprenol N-acetylglucosamine transferase (363 aa).

UDP-N-acetyl-alpha-D-glucosamine contacts are provided by residues 15 to 17, asparagine 127, arginine 163, serine 191, isoleucine 244, 263 to 268, and glutamine 288; these read TGG and ALTVSE.

Belongs to the glycosyltransferase 28 family. MurG subfamily.

The protein localises to the cell inner membrane. It carries out the reaction di-trans,octa-cis-undecaprenyl diphospho-N-acetyl-alpha-D-muramoyl-L-alanyl-D-glutamyl-meso-2,6-diaminopimeloyl-D-alanyl-D-alanine + UDP-N-acetyl-alpha-D-glucosamine = di-trans,octa-cis-undecaprenyl diphospho-[N-acetyl-alpha-D-glucosaminyl-(1-&gt;4)]-N-acetyl-alpha-D-muramoyl-L-alanyl-D-glutamyl-meso-2,6-diaminopimeloyl-D-alanyl-D-alanine + UDP + H(+). Its pathway is cell wall biogenesis; peptidoglycan biosynthesis. Its function is as follows. Cell wall formation. Catalyzes the transfer of a GlcNAc subunit on undecaprenyl-pyrophosphoryl-MurNAc-pentapeptide (lipid intermediate I) to form undecaprenyl-pyrophosphoryl-MurNAc-(pentapeptide)GlcNAc (lipid intermediate II). The sequence is that of UDP-N-acetylglucosamine--N-acetylmuramyl-(pentapeptide) pyrophosphoryl-undecaprenol N-acetylglucosamine transferase from Pectobacterium carotovorum subsp. carotovorum (strain PC1).